The following is a 3146-amino-acid chain: Bassianolide nonribosomal cyclodepsipeptide synthetase (3146 aa).

Residues 1 to 12 show a composition bias toward polar residues; sequence MEPPNNANTGQL. The disordered stretch occupies residues 1–23; that stretch reads MEPPNNANTGQLGPTLPNGTVDL. The segment at 69–454 is condensation 1; the sequence is HVVYEIPEDV…INKLQSTDGS (386 aa). The tract at residues 495–887 is adenylation 1; it reads GDTPNKPAVC…GRMDSQVKIR (393 aa). One can recognise a Carrier 1 domain in the interval 1015–1091; it reads PDASAGVTKL…SLQAAIGGSS (77 aa). S1052 bears the O-(pantetheine 4'-phosphoryl)serine mark. Residues 1109 to 1538 are condensation 2; the sequence is SYSQGRLWFL…QTLISVVPLT (430 aa). The tract at residues 1567–1973 is adenylation 2; the sequence is FRTQVASYPD…GRMDFQFKIR (407 aa). Positions 2041–2181 are S-adenosyl-L-methionine-dependent N-methyltransferase (MT); it reads TYTELDTVSS…FPTRDYLERV (141 aa). Carrier domains follow at residues 2514–2588 and 2614–2688; these read FPLS…RQQL and APTT…EVSQ. 2 positions are modified to O-(pantetheine 4'-phosphoryl)serine: S2548 and S2648. Positions 2734-3138 are condensation 3; that stretch reads QDVYLATHLQ…THLMEQVCNT (405 aa).

It belongs to the NRP synthetase family.

The enzyme catalyses 4 (R)-2-hydroxy-3-methylbutanoate + 4 L-leucine + 4 S-adenosyl-L-methionine + 8 ATP = bassianolide + 8 AMP + 4 S-adenosyl-L-homocysteine + 8 diphosphate + 8 H(+). Bassianolide nonribosomal synthetase that mediates the biosynthesis of bassianolide (BSL), a non-ribosomal cyclodepsipeptide that shows insecticidal and cancer cell antiproliferative activity. BSLS first catalyzes the iterative synthesis of an enzyme-bound dipeptidol monomer intermediate from D-2-hydroxyisovalerate and L-leucine before performing the condensation and cyclization of 4 dipeptidol monomers to yield the cyclic tetrameric ester bassianolide. The N-methyltransferase MT domain is responsible for the methylation of the leucine residues of bassianolide. BSLS is flexible with both the amino acid and hydroxyl acid precursors, and produces bassianolide as the major product (containing N-methyl-L-Leu), together with small amounts of beauvericin and its analogs beauvericins A-C (containing N-methyl-L-Phe). This is Bassianolide nonribosomal cyclodepsipeptide synthetase from Beauveria bassiana (White muscardine disease fungus).